A 155-amino-acid polypeptide reads, in one-letter code: NADH-ubiquinone oxidoreductase chain 6 (155 aa).

The next 4 membrane-spanning stretches (helical) occupy residues 10-30, 43-63, 75-95, and 133-153; these read ILAIGLLSPVQSIVCLIVLFV, LMGILYVLIYVGAIAILFLFI, GTIHPLIFTILIICLIPLDLS, and AIPMILIGLILILSVIGAIAI.

The protein belongs to the complex I subunit 6 family.

Its subcellular location is the mitochondrion membrane. The catalysed reaction is a ubiquinone + NADH + 5 H(+)(in) = a ubiquinol + NAD(+) + 4 H(+)(out). Its function is as follows. Core subunit of the mitochondrial membrane respiratory chain NADH dehydrogenase (Complex I) that is believed to belong to the minimal assembly required for catalysis. Complex I functions in the transfer of electrons from NADH to the respiratory chain. The immediate electron acceptor for the enzyme is believed to be ubiquinone. The sequence is that of NADH-ubiquinone oxidoreductase chain 6 (ND6) from Candida parapsilosis (Yeast).